A 366-amino-acid polypeptide reads, in one-letter code: 5-hydroxytryptamine receptor 1F (366 aa).

Topologically, residues 1 to 24 (MDFLNSSDQNLTSEELLHRMPSKI) are extracellular. Asn5 and Asn10 each carry an N-linked (GlcNAc...) asparagine glycan. A helical transmembrane segment spans residues 25–49 (LVSLTLSGLALMTTTINSLVIAAII). Residues 50–59 (VTRKLHHPAN) are Cytoplasmic-facing. The helical transmembrane segment at 60-81 (YLICSLAVTDFLVAVLVMPFSI) threads the bilayer. Residues 82–96 (VYIVRESWIMGQVLC) lie on the Extracellular side of the membrane. Cysteines 96 and 172 form a disulfide. Residues 97–119 (DIWLSVDIICCTCSILHLSAIAL) traverse the membrane as a helical segment. Serotonin is bound by residues Asp103 and Cys107. The short motif at 120-122 (DRY) is the DRY motif; important for ligand-induced conformation changes element. At 120–139 (DRYRAITDAVEYARKRTPKQ) the chain is on the cytoplasmic side. Residues 140–159 (AGIMITIVWIISVFISMPPL) traverse the membrane as a helical segment. Topologically, residues 160–178 (FWRHQGTSRDDECIIKHDH) are extracellular. Residues 179–202 (IVSTIYSTFGAFYIPLVLILILYY) traverse the membrane as a helical segment. The Cytoplasmic portion of the chain corresponds to 203-291 (KIYKAAKTLY…KISGTRERKA (89 aa)). The helical transmembrane segment at 292-315 (ATTLGLILGAFVICWLPFFVKELV) threads the bilayer. The Extracellular segment spans residues 316 to 327 (VNVCEKCKISEE). Residues 328–350 (MANFLAWLGYLNSLINPLIYTIF) form a helical membrane-spanning segment. The short motif at 343–347 (NPLIY) is the NPxxY motif; important for ligand-induced conformation changes and signaling element. At 351–366 (NEDFKKAFQKLVRCQY) the chain is on the cytoplasmic side.

It belongs to the G-protein coupled receptor 1 family.

The protein localises to the cell membrane. Functionally, G-protein coupled receptor for 5-hydroxytryptamine (serotonin). Also functions as a receptor for various alkaloids and psychoactive substances. Ligand binding causes a conformation change that triggers signaling via guanine nucleotide-binding proteins (G proteins) and modulates the activity of downstream effectors, such as adenylate cyclase. HTR1F is coupled to G(i)/G(o) G alpha proteins and mediates inhibitory neurotransmission by inhibiting adenylate cyclase activity. In Cavia porcellus (Guinea pig), this protein is 5-hydroxytryptamine receptor 1F (HTR1F).